A 145-amino-acid chain; its full sequence is Large ribosomal subunit protein uL11 (145 aa).

Belongs to the universal ribosomal protein uL11 family. As to quaternary structure, part of the ribosomal stalk of the 50S ribosomal subunit. Interacts with L10 and the large rRNA to form the base of the stalk. L10 forms an elongated spine to which L12 dimers bind in a sequential fashion forming a multimeric L10(L12)X complex. In terms of processing, one or more lysine residues are methylated.

In terms of biological role, forms part of the ribosomal stalk which helps the ribosome interact with GTP-bound translation factors. In Rickettsia akari (strain Hartford), this protein is Large ribosomal subunit protein uL11.